Reading from the N-terminus, the 965-residue chain is Phosphoenolpyruvate carboxylase (965 aa).

Ser11 carries the post-translational modification Phosphoserine. Active-site residues include His173 and Lys601.

The protein belongs to the PEPCase type 1 family. As to quaternary structure, homotetramer. Mg(2+) is required as a cofactor.

It is found in the cytoplasm. It carries out the reaction oxaloacetate + phosphate = phosphoenolpyruvate + hydrogencarbonate. It participates in photosynthesis; C3 acid pathway. With respect to regulation, by light-reversible phosphorylation. Its function is as follows. Through the carboxylation of phosphoenolpyruvate (PEP) it forms oxaloacetate, a four-carbon dicarboxylic acid source for the tricarboxylic acid cycle. The polypeptide is Phosphoenolpyruvate carboxylase (PPC1) (Solanum tuberosum (Potato)).